The sequence spans 311 residues: Coproporphyrin III ferrochelatase (311 aa).

Fe-coproporphyrin III-binding positions include Tyr-12, Arg-29, 45–46 (RY), Ser-53, and Tyr-124. Positions 182 and 263 each coordinate Fe(2+).

This sequence belongs to the ferrochelatase family.

It localises to the cytoplasm. It catalyses the reaction Fe-coproporphyrin III + 2 H(+) = coproporphyrin III + Fe(2+). It participates in porphyrin-containing compound metabolism; protoheme biosynthesis. In terms of biological role, involved in coproporphyrin-dependent heme b biosynthesis. Catalyzes the insertion of ferrous iron into coproporphyrin III to form Fe-coproporphyrin III. This Bacillus mycoides (strain KBAB4) (Bacillus weihenstephanensis) protein is Coproporphyrin III ferrochelatase.